We begin with the raw amino-acid sequence, 163 residues long: Crossover junction endodeoxyribonuclease RuvC (163 aa).

Residues Asp9, Glu76, and Asp148 contribute to the active site. Mg(2+)-binding residues include Asp9, Glu76, and Asp148.

It belongs to the RuvC family. Homodimer which binds Holliday junction (HJ) DNA. The HJ becomes 2-fold symmetrical on binding to RuvC with unstacked arms; it has a different conformation from HJ DNA in complex with RuvA. In the full resolvosome a probable DNA-RuvA(4)-RuvB(12)-RuvC(2) complex forms which resolves the HJ. It depends on Mg(2+) as a cofactor.

It is found in the cytoplasm. It carries out the reaction Endonucleolytic cleavage at a junction such as a reciprocal single-stranded crossover between two homologous DNA duplexes (Holliday junction).. Its function is as follows. The RuvA-RuvB-RuvC complex processes Holliday junction (HJ) DNA during genetic recombination and DNA repair. Endonuclease that resolves HJ intermediates. Cleaves cruciform DNA by making single-stranded nicks across the HJ at symmetrical positions within the homologous arms, yielding a 5'-phosphate and a 3'-hydroxyl group; requires a central core of homology in the junction. The consensus cleavage sequence is 5'-(A/T)TT(C/G)-3'. Cleavage occurs on the 3'-side of the TT dinucleotide at the point of strand exchange. HJ branch migration catalyzed by RuvA-RuvB allows RuvC to scan DNA until it finds its consensus sequence, where it cleaves and resolves the cruciform DNA. This Nostoc sp. (strain PCC 7120 / SAG 25.82 / UTEX 2576) protein is Crossover junction endodeoxyribonuclease RuvC.